Reading from the N-terminus, the 237-residue chain is Phosphoribosylaminoimidazole-succinocarboxamide synthase (237 aa).

Belongs to the SAICAR synthetase family.

The catalysed reaction is 5-amino-1-(5-phospho-D-ribosyl)imidazole-4-carboxylate + L-aspartate + ATP = (2S)-2-[5-amino-1-(5-phospho-beta-D-ribosyl)imidazole-4-carboxamido]succinate + ADP + phosphate + 2 H(+). It participates in purine metabolism; IMP biosynthesis via de novo pathway; 5-amino-1-(5-phospho-D-ribosyl)imidazole-4-carboxamide from 5-amino-1-(5-phospho-D-ribosyl)imidazole-4-carboxylate: step 1/2. This is Phosphoribosylaminoimidazole-succinocarboxamide synthase from Psychrobacter arcticus (strain DSM 17307 / VKM B-2377 / 273-4).